The primary structure comprises 300 residues: N-acetylmuramic acid 6-phosphate etherase 1 (300 aa).

The SIS domain maps to 59–222 (AAERFKKGGR…STGIMVKVGN (164 aa)). Residue Glu87 is the Proton donor of the active site. The active site involves Glu118.

This sequence belongs to the GCKR-like family. MurNAc-6-P etherase subfamily. Homodimer.

It carries out the reaction N-acetyl-D-muramate 6-phosphate + H2O = N-acetyl-D-glucosamine 6-phosphate + (R)-lactate. The protein operates within amino-sugar metabolism; N-acetylmuramate degradation. Functionally, specifically catalyzes the cleavage of the D-lactyl ether substituent of MurNAc 6-phosphate, producing GlcNAc 6-phosphate and D-lactate. This is N-acetylmuramic acid 6-phosphate etherase 1 from Enterococcus faecalis (strain ATCC 700802 / V583).